The primary structure comprises 429 residues: Serine hydroxymethyltransferase (429 aa).

Residues Leu133 and 137–139 (GHL) each bind (6S)-5,6,7,8-tetrahydrofolate. The residue at position 243 (Lys243) is an N6-(pyridoxal phosphate)lysine. Glu259 contributes to the (6S)-5,6,7,8-tetrahydrofolate binding site.

The protein belongs to the SHMT family. As to quaternary structure, homodimer. Pyridoxal 5'-phosphate is required as a cofactor.

It is found in the cytoplasm. It carries out the reaction (6R)-5,10-methylene-5,6,7,8-tetrahydrofolate + glycine + H2O = (6S)-5,6,7,8-tetrahydrofolate + L-serine. It functions in the pathway one-carbon metabolism; tetrahydrofolate interconversion. Its pathway is amino-acid biosynthesis; glycine biosynthesis; glycine from L-serine: step 1/1. Catalyzes the reversible interconversion of serine and glycine with tetrahydrofolate (THF) serving as the one-carbon carrier. This reaction serves as the major source of one-carbon groups required for the biosynthesis of purines, thymidylate, methionine, and other important biomolecules. Also exhibits THF-independent aldolase activity toward beta-hydroxyamino acids, producing glycine and aldehydes, via a retro-aldol mechanism. In Aster yellows witches'-broom phytoplasma (strain AYWB), this protein is Serine hydroxymethyltransferase.